A 217-amino-acid polypeptide reads, in one-letter code: uncharacterized protein (217 aa).

This is an uncharacterized protein from Homo sapiens (Human).